The sequence spans 96 residues: Aspartyl/glutamyl-tRNA(Asn/Gln) amidotransferase subunit C (96 aa).

Belongs to the GatC family. Heterotrimer of A, B and C subunits.

It catalyses the reaction L-glutamyl-tRNA(Gln) + L-glutamine + ATP + H2O = L-glutaminyl-tRNA(Gln) + L-glutamate + ADP + phosphate + H(+). The catalysed reaction is L-aspartyl-tRNA(Asn) + L-glutamine + ATP + H2O = L-asparaginyl-tRNA(Asn) + L-glutamate + ADP + phosphate + 2 H(+). Its function is as follows. Allows the formation of correctly charged Asn-tRNA(Asn) or Gln-tRNA(Gln) through the transamidation of misacylated Asp-tRNA(Asn) or Glu-tRNA(Gln) in organisms which lack either or both of asparaginyl-tRNA or glutaminyl-tRNA synthetases. The reaction takes place in the presence of glutamine and ATP through an activated phospho-Asp-tRNA(Asn) or phospho-Glu-tRNA(Gln). This Acaryochloris marina (strain MBIC 11017) protein is Aspartyl/glutamyl-tRNA(Asn/Gln) amidotransferase subunit C.